Here is a 234-residue protein sequence, read N- to C-terminus: Phosphoribosylaminoimidazole-succinocarboxamide synthase (234 aa).

This sequence belongs to the SAICAR synthetase family.

The enzyme catalyses 5-amino-1-(5-phospho-D-ribosyl)imidazole-4-carboxylate + L-aspartate + ATP = (2S)-2-[5-amino-1-(5-phospho-beta-D-ribosyl)imidazole-4-carboxamido]succinate + ADP + phosphate + 2 H(+). Its pathway is purine metabolism; IMP biosynthesis via de novo pathway; 5-amino-1-(5-phospho-D-ribosyl)imidazole-4-carboxamide from 5-amino-1-(5-phospho-D-ribosyl)imidazole-4-carboxylate: step 1/2. The protein is Phosphoribosylaminoimidazole-succinocarboxamide synthase of Clostridium botulinum (strain ATCC 19397 / Type A).